Reading from the N-terminus, the 206-residue chain is Undecaprenyl-diphosphatase (206 aa).

Helical transmembrane passes span 5–25 (YYWILLLLFLILSIYIKLIGG), 53–73 (FLSKYGREYVWIPVTALLLIF), 79–99 (IGITLVISFVIAIVLGEVSKY), 138–158 (VTLLLTSPKWMWILGIIEAVL), and 164–184 (VYVGVHWPLDVIAGWLLGSWI).

The protein localises to the cell membrane. It catalyses the reaction di-trans,octa-cis-undecaprenyl diphosphate + H2O = di-trans,octa-cis-undecaprenyl phosphate + phosphate + H(+). The protein is Undecaprenyl-diphosphatase (sepP) of Sulfolobus acidocaldarius (strain ATCC 33909 / DSM 639 / JCM 8929 / NBRC 15157 / NCIMB 11770).